The primary structure comprises 309 residues: Polyprenal reductase (309 aa).

The next 7 helical transmembrane spans lie at 12–32, 72–92, 114–134, 151–171, 184–204, 242–262, and 270–290; these read LPLY…FTLI, FYAI…SLIY, IPPI…LHVA, MNLF…ISIM, LHVS…LFWI, LVSC…FLVI, and FIIM…HSWY.

This sequence belongs to the steroid 5-alpha reductase family. Polyprenal reductase subfamily.

It localises to the endoplasmic reticulum membrane. The enzyme catalyses a di-trans,poly-cis-dolichal + NADP(+) = a di-trans,poly-cis-polyprenal + NADPH + H(+). The protein operates within protein modification; protein glycosylation. Functionally, plays a key role in early steps of protein N-linked glycosylation by being involved in the conversion of polyprenol into dolichol. Acts as a polyprenal reductase that mediates the reduction of polyprenal into dolichal in a NADP-dependent mechanism. Dolichols are required for the synthesis of dolichol-linked monosaccharides and the oligosaccharide precursor used for N-glycosylation. In Caenorhabditis elegans, this protein is Polyprenal reductase.